The primary structure comprises 230 residues: Cytochrome b6-f complex iron-sulfur subunit, chloroplastic (230 aa).

The N-terminal 51 residues, 1 to 51, are a transit peptide targeting the chloroplast; it reads MASFTLSSATPSQLCSSKNGMFAPSLALAKAGRVNVLISKERIRGMKLTCQ. Residues 73-93 form a helical membrane-spanning segment; sequence LLGALSLPTGYMLLPYASFFV. A Rieske domain is found at 116-212; the sequence is AAEWLKTHAP…CDVDDGKVVF (97 aa). [2Fe-2S] cluster contacts are provided by Cys-158, His-160, Cys-176, and His-179. A disulfide bridge connects residues Cys-163 and Cys-178.

It belongs to the Rieske iron-sulfur protein family. In terms of assembly, the 4 large subunits of the cytochrome b6-f complex are cytochrome b6, subunit IV (17 kDa polypeptide, petD), cytochrome f and the Rieske protein, while the 4 small subunits are petG, petL, petM and petN. The complex functions as a dimer. It depends on [2Fe-2S] cluster as a cofactor.

Its subcellular location is the plastid. The protein resides in the chloroplast thylakoid membrane. The catalysed reaction is 2 oxidized [plastocyanin] + a plastoquinol + 2 H(+)(in) = 2 reduced [plastocyanin] + a plastoquinone + 4 H(+)(out). Functionally, component of the cytochrome b6-f complex, which mediates electron transfer between photosystem II (PSII) and photosystem I (PSI), cyclic electron flow around PSI, and state transitions. This chain is Cytochrome b6-f complex iron-sulfur subunit, chloroplastic (petC), found in Spinacia oleracea (Spinach).